The chain runs to 106 residues: Testis-specific basic protein Y 2 (106 aa).

It belongs to the VCX/VCY family. In terms of assembly, interacts with MAP1S. Interacts with UBE3A (via HECT domain). In terms of tissue distribution, expressed exclusively in testis. Expressed in ejaculated spermatozoa of germ cell. Expressed in the nuclei of spermatogonia, spermatocytes, and round spermatids, except elongated spermatids (at protein level).

This chain is Testis-specific basic protein Y 2 (BPY2), found in Homo sapiens (Human).